A 468-amino-acid polypeptide reads, in one-letter code: 6-phosphogluconate dehydrogenase, decarboxylating (468 aa).

Residues Gly-10 to Gly-15, Asn-33 to Ser-35, Val-74 to Ala-76, and Asn-102 contribute to the NADP(+) site. Substrate-binding positions include Asn-102 and Ser-128–Gly-130. Lys-183 (proton acceptor) is an active-site residue. His-186 to Asn-187 lines the substrate pocket. The Proton donor role is filled by Glu-190. Residues Tyr-191, Lys-260, Arg-287, Arg-445, and His-451 each coordinate substrate.

The protein belongs to the 6-phosphogluconate dehydrogenase family. Homodimer.

The enzyme catalyses 6-phospho-D-gluconate + NADP(+) = D-ribulose 5-phosphate + CO2 + NADPH. The protein operates within carbohydrate degradation; pentose phosphate pathway; D-ribulose 5-phosphate from D-glucose 6-phosphate (oxidative stage): step 3/3. Catalyzes the oxidative decarboxylation of 6-phosphogluconate to ribulose 5-phosphate and CO(2), with concomitant reduction of NADP to NADPH. The protein is 6-phosphogluconate dehydrogenase, decarboxylating (gnd) of Shigella flexneri.